Consider the following 273-residue polypeptide: MPELPEVEVTRRGVAPYLEGQVVSGVVLRHTGLRWPFPAALSQTLAGRTIRSTGRRGKYLLIHFDHGTLIVHLGMSGHIRILPLGVPPQKHDHFDMTVGNQVLRLTDPRRFGAVLWHAAEEGAVDQHLLLRTLGVEPLEGLFTAQWLYRQTRSRRSAIKQVLLAGDIVVGVGNIYASESLFQAGINPKTQAHRIGLQRYERLAQAIREILAAAIAQGGSTLKDFIGVNGQSGYFQQNYFVYARTGEPCRICNAPVRQIVQGQRSTFYCPNCQK.

Pro2 functions as the Schiff-base intermediate with DNA in the catalytic mechanism. Glu3 serves as the catalytic Proton donor. Lys58 acts as the Proton donor; for beta-elimination activity in catalysis. His91, Arg109, and Arg154 together coordinate DNA. An FPG-type zinc finger spans residues 239 to 273 (FVYARTGEPCRICNAPVRQIVQGQRSTFYCPNCQK). Residue Arg263 is the Proton donor; for delta-elimination activity of the active site.

Belongs to the FPG family. As to quaternary structure, monomer. Requires Zn(2+) as cofactor.

It carries out the reaction Hydrolysis of DNA containing ring-opened 7-methylguanine residues, releasing 2,6-diamino-4-hydroxy-5-(N-methyl)formamidopyrimidine.. It catalyses the reaction 2'-deoxyribonucleotide-(2'-deoxyribose 5'-phosphate)-2'-deoxyribonucleotide-DNA = a 3'-end 2'-deoxyribonucleotide-(2,3-dehydro-2,3-deoxyribose 5'-phosphate)-DNA + a 5'-end 5'-phospho-2'-deoxyribonucleoside-DNA + H(+). In terms of biological role, involved in base excision repair of DNA damaged by oxidation or by mutagenic agents. Acts as a DNA glycosylase that recognizes and removes damaged bases. Has a preference for oxidized purines, such as 7,8-dihydro-8-oxoguanine (8-oxoG). Has AP (apurinic/apyrimidinic) lyase activity and introduces nicks in the DNA strand. Cleaves the DNA backbone by beta-delta elimination to generate a single-strand break at the site of the removed base with both 3'- and 5'-phosphates. The polypeptide is Formamidopyrimidine-DNA glycosylase (Herminiimonas arsenicoxydans).